Consider the following 357-residue polypeptide: Holliday junction branch migration complex subunit RuvB (357 aa).

A large ATPase domain (RuvB-L) region spans residues 4-195; the sequence is TDKLAAKAVS…FGIVARLEFY (192 aa). Residues Leu34, Arg35, Gly76, Lys79, Thr80, Thr81, 142–144, Arg185, Tyr195, and Arg232 contribute to the ATP site; that span reads EDY. Thr80 contacts Mg(2+). Residues 196–266 are small ATPAse domain (RuvB-S); sequence TPTELARIVT…VADAALAMLD (71 aa). The head domain (RuvB-H) stretch occupies residues 269–357; the sequence is AVGFDLMDRK…PARDLWDNNA (89 aa). 3 residues coordinate DNA: Arg305, Arg324, and Arg329.

The protein belongs to the RuvB family. In terms of assembly, homohexamer. Forms an RuvA(8)-RuvB(12)-Holliday junction (HJ) complex. HJ DNA is sandwiched between 2 RuvA tetramers; dsDNA enters through RuvA and exits via RuvB. An RuvB hexamer assembles on each DNA strand where it exits the tetramer. Each RuvB hexamer is contacted by two RuvA subunits (via domain III) on 2 adjacent RuvB subunits; this complex drives branch migration. In the full resolvosome a probable DNA-RuvA(4)-RuvB(12)-RuvC(2) complex forms which resolves the HJ.

The protein resides in the cytoplasm. The enzyme catalyses ATP + H2O = ADP + phosphate + H(+). Functionally, the RuvA-RuvB-RuvC complex processes Holliday junction (HJ) DNA during genetic recombination and DNA repair, while the RuvA-RuvB complex plays an important role in the rescue of blocked DNA replication forks via replication fork reversal (RFR). RuvA specifically binds to HJ cruciform DNA, conferring on it an open structure. The RuvB hexamer acts as an ATP-dependent pump, pulling dsDNA into and through the RuvAB complex. RuvB forms 2 homohexamers on either side of HJ DNA bound by 1 or 2 RuvA tetramers; 4 subunits per hexamer contact DNA at a time. Coordinated motions by a converter formed by DNA-disengaged RuvB subunits stimulates ATP hydrolysis and nucleotide exchange. Immobilization of the converter enables RuvB to convert the ATP-contained energy into a lever motion, pulling 2 nucleotides of DNA out of the RuvA tetramer per ATP hydrolyzed, thus driving DNA branch migration. The RuvB motors rotate together with the DNA substrate, which together with the progressing nucleotide cycle form the mechanistic basis for DNA recombination by continuous HJ branch migration. Branch migration allows RuvC to scan DNA until it finds its consensus sequence, where it cleaves and resolves cruciform DNA. In Ralstonia nicotianae (strain ATCC BAA-1114 / GMI1000) (Ralstonia solanacearum), this protein is Holliday junction branch migration complex subunit RuvB.